The following is a 618-amino-acid chain: Proline--tRNA ligase (618 aa).

Belongs to the class-II aminoacyl-tRNA synthetase family. ProS type 1 subfamily. In terms of assembly, homodimer.

It is found in the cytoplasm. The enzyme catalyses tRNA(Pro) + L-proline + ATP = L-prolyl-tRNA(Pro) + AMP + diphosphate. Functionally, catalyzes the attachment of proline to tRNA(Pro) in a two-step reaction: proline is first activated by ATP to form Pro-AMP and then transferred to the acceptor end of tRNA(Pro). As ProRS can inadvertently accommodate and process non-cognate amino acids such as alanine and cysteine, to avoid such errors it has two additional distinct editing activities against alanine. One activity is designated as 'pretransfer' editing and involves the tRNA(Pro)-independent hydrolysis of activated Ala-AMP. The other activity is designated 'posttransfer' editing and involves deacylation of mischarged Ala-tRNA(Pro). The misacylated Cys-tRNA(Pro) is not edited by ProRS. The polypeptide is Proline--tRNA ligase (Streptococcus pyogenes serotype M1).